Consider the following 334-residue polypeptide: Beta-hexosaminidase (334 aa).

Substrate-binding positions include Asp60, Arg68, Arg133, and 163–164; that span reads KH. The active-site Proton donor/acceptor is the His176. Residue Asp247 is the Nucleophile of the active site.

It belongs to the glycosyl hydrolase 3 family. NagZ subfamily.

Its subcellular location is the cytoplasm. The enzyme catalyses Hydrolysis of terminal non-reducing N-acetyl-D-hexosamine residues in N-acetyl-beta-D-hexosaminides.. Its pathway is cell wall biogenesis; peptidoglycan recycling. Functionally, plays a role in peptidoglycan recycling by cleaving the terminal beta-1,4-linked N-acetylglucosamine (GlcNAc) from peptide-linked peptidoglycan fragments, giving rise to free GlcNAc, anhydro-N-acetylmuramic acid and anhydro-N-acetylmuramic acid-linked peptides. The sequence is that of Beta-hexosaminidase from Xanthomonas oryzae pv. oryzae (strain MAFF 311018).